The primary structure comprises 222 residues: Peptidyl-prolyl cis-trans isomerase FKBP7 (222 aa).

An N-terminal signal peptide occupies residues 1 to 23 (MPKTMHFLFRFIVFFYLWGLFTA). Residue Asn-45 is glycosylated (N-linked (GlcNAc...) asparagine). The 93-residue stretch at 53–145 (GDLLNAHYDG…IFEIELYAVT (93 aa)) folds into the PPIase FKBP-type domain. EF-hand domains are found at residues 145-180 (TKGP…EFEK) and 189-222 (YQDA…HDEL). 9 residues coordinate Ca(2+): Asp-158, Asp-160, Asp-162, Gln-164, Glu-169, Asp-202, Asp-204, Asp-206, and Glu-213. Positions 219 to 222 (HDEL) match the Prevents secretion from ER motif.

In terms of processing, glycosylated.

The protein resides in the endoplasmic reticulum lumen. It catalyses the reaction [protein]-peptidylproline (omega=180) = [protein]-peptidylproline (omega=0). PPIases accelerate the folding of proteins during protein synthesis. The chain is Peptidyl-prolyl cis-trans isomerase FKBP7 (FKBP7) from Pongo abelii (Sumatran orangutan).